The following is a 30-amino-acid chain: L-amino-acid oxidase (30 aa).

Belongs to the flavin monoamine oxidase family. FIG1 subfamily. Monomer. This is in contrast with most of its orthologs, that are non-covalently linked homodimers. It depends on FAD as a cofactor. In terms of processing, N-glycosylated. In terms of tissue distribution, expressed by the venom gland.

It localises to the secreted. It carries out the reaction an L-alpha-amino acid + O2 + H2O = a 2-oxocarboxylate + H2O2 + NH4(+). It catalyses the reaction L-leucine + O2 + H2O = 4-methyl-2-oxopentanoate + H2O2 + NH4(+). The catalysed reaction is L-phenylalanine + O2 + H2O = 3-phenylpyruvate + H2O2 + NH4(+). The enzyme catalyses L-tryptophan + O2 + H2O = indole-3-pyruvate + H2O2 + NH4(+). It carries out the reaction L-methionine + O2 + H2O = 4-methylsulfanyl-2-oxobutanoate + H2O2 + NH4(+). It catalyses the reaction L-2-aminohexanoate + O2 + H2O = 2-oxohexanoate + H2O2 + NH4(+). The catalysed reaction is L-tyrosine + O2 + H2O = 3-(4-hydroxyphenyl)pyruvate + H2O2 + NH4(+). Functionally, catalyzes an oxidative deamination of predominantly hydrophobic and aromatic L-amino acids, thus producing hydrogen peroxide that may contribute to the diverse toxic effects of this enzyme. Is highly active against L-Met, L-Leu, L-norleucine (L-2-aminohexanoate), L-Trp, L-Phe, moderately active against L-Tyr, and no active on L-Gly, L-Ala, L-Val, L-Pro, L-His, L-Lys, L-Arg, L-Asp, L-Asn, L-Gln, L-Glu, L-Ser, and L-Thr. Exhibits diverse biological activities, such as hemorrhage, hemolysis, edema, antibacterial and antiparasitic activities. In addition, this protein induces apoptosis. It also interacts with endothelial cells, and inhibits collagen- and ADP-induced platelet aggregation. L-LAAO family effects on platelets are controversial, since it either induces aggregation or inhibits agonist-induced aggregation. These different effects are probably due to different experimental conditions. This is L-amino-acid oxidase from Bothrops leucurus (Whitetail lancehead).